The following is a 452-amino-acid chain: Methionine aminopeptidase 2 (452 aa).

The segment at 1–96 is disordered; that stretch reads MAVQALPEIN…VPLSTLFPNN (96 aa). The span at 18–35 shows a compositional bias: low complexity; sequence GAANAAAKGQAAQGTAGN. Acidic residues predominate over residues 36-53; sequence DDAENDESDEDKEDEQEV. The span at 62–77 shows a compositional bias: basic residues; the sequence is GKKKKKKTKKKKKKGT. Residue His-202 participates in substrate binding. A divalent metal cation contacts are provided by Asp-222, Asp-233, and His-302. Substrate is bound at residue His-310. A divalent metal cation-binding residues include Glu-338 and Glu-433.

The protein belongs to the peptidase M24A family. Methionine aminopeptidase eukaryotic type 2 subfamily. It depends on Co(2+) as a cofactor. The cofactor is Zn(2+). Mn(2+) is required as a cofactor. Fe(2+) serves as cofactor.

It localises to the cytoplasm. It catalyses the reaction Release of N-terminal amino acids, preferentially methionine, from peptides and arylamides.. Cotranslationally removes the N-terminal methionine from nascent proteins. The N-terminal methionine is often cleaved when the second residue in the primary sequence is small and uncharged (Met-Ala-, Cys, Gly, Pro, Ser, Thr, or Val). The chain is Methionine aminopeptidase 2 from Coccidioides posadasii (strain C735) (Valley fever fungus).